We begin with the raw amino-acid sequence, 252 residues long: 5'-nucleotidase SurE (252 aa).

A divalent metal cation is bound by residues aspartate 8, aspartate 9, serine 39, and asparagine 91.

The protein belongs to the SurE nucleotidase family. The cofactor is a divalent metal cation.

It is found in the cytoplasm. It catalyses the reaction a ribonucleoside 5'-phosphate + H2O = a ribonucleoside + phosphate. Nucleotidase that shows phosphatase activity on nucleoside 5'-monophosphates. In Paraburkholderia xenovorans (strain LB400), this protein is 5'-nucleotidase SurE.